A 193-amino-acid chain; its full sequence is Potassium-transporting ATPase KdpC subunit (193 aa).

The chain crosses the membrane as a helical span at residues 14–34 (ITFTFLVLCGLVYPLIVTGIA).

The protein belongs to the KdpC family. In terms of assembly, the system is composed of three essential subunits: KdpA, KdpB and KdpC.

It localises to the cell membrane. In terms of biological role, part of the high-affinity ATP-driven potassium transport (or Kdp) system, which catalyzes the hydrolysis of ATP coupled with the electrogenic transport of potassium into the cytoplasm. This subunit acts as a catalytic chaperone that increases the ATP-binding affinity of the ATP-hydrolyzing subunit KdpB by the formation of a transient KdpB/KdpC/ATP ternary complex. This chain is Potassium-transporting ATPase KdpC subunit, found in Bacillus anthracis (strain A0248).